The sequence spans 400 residues: Elongation factor Tu 1 (400 aa).

The region spanning 10–209 is the tr-type G domain; that stretch reads KPHLNIGTIG…AVDSYIPLPQ (200 aa). Positions 19-26 are G1; the sequence is GHIDHGKT. Residue 19 to 26 coordinates GTP; it reads GHIDHGKT. Thr26 lines the Mg(2+) pocket. Positions 60 to 64 are G2; that stretch reads GITIN. The interval 81-84 is G3; that stretch reads DCPG. Residues 81 to 85 and 136 to 139 contribute to the GTP site; these read DCPGH and NKTD. The tract at residues 136–139 is G4; the sequence is NKTD. The interval 174 to 176 is G5; that stretch reads SAL.

Belongs to the TRAFAC class translation factor GTPase superfamily. Classic translation factor GTPase family. EF-Tu/EF-1A subfamily. Monomer.

It is found in the cytoplasm. The enzyme catalyses GTP + H2O = GDP + phosphate + H(+). Functionally, GTP hydrolase that promotes the GTP-dependent binding of aminoacyl-tRNA to the A-site of ribosomes during protein biosynthesis. The chain is Elongation factor Tu 1 from Syntrophomonas wolfei subsp. wolfei (strain DSM 2245B / Goettingen).